The sequence spans 257 residues: NAD-capped RNA hydrolase NudC (257 aa).

Substrate-binding residues include lysine 25 and arginine 69. Zn(2+) is bound by residues cysteine 98 and cysteine 101. Position 111 (glutamate 111) interacts with substrate. Zn(2+) is bound by residues cysteine 116 and cysteine 119. Tyrosine 124 contacts substrate. The Nudix hydrolase domain maps to proline 125–threonine 248. A divalent metal cation is bound by residues alanine 158, glutamate 174, and glutamate 178. The short motif at glycine 159–glycine 180 is the Nudix box element. Glutamine 192–serine 199 is a binding site for substrate. Residue glutamate 219 participates in a divalent metal cation binding. Alanine 241 serves as a coordination point for substrate.

Belongs to the Nudix hydrolase family. NudC subfamily. As to quaternary structure, homodimer. The cofactor is Mg(2+). Requires Mn(2+) as cofactor. Zn(2+) serves as cofactor.

The enzyme catalyses a 5'-end NAD(+)-phospho-ribonucleoside in mRNA + H2O = a 5'-end phospho-adenosine-phospho-ribonucleoside in mRNA + beta-nicotinamide D-ribonucleotide + 2 H(+). It catalyses the reaction NAD(+) + H2O = beta-nicotinamide D-ribonucleotide + AMP + 2 H(+). The catalysed reaction is NADH + H2O = reduced beta-nicotinamide D-ribonucleotide + AMP + 2 H(+). Its function is as follows. mRNA decapping enzyme that specifically removes the nicotinamide adenine dinucleotide (NAD) cap from a subset of mRNAs by hydrolyzing the diphosphate linkage to produce nicotinamide mononucleotide (NMN) and 5' monophosphate mRNA. The NAD-cap is present at the 5'-end of some mRNAs and stabilizes RNA against 5'-processing. Has preference for mRNAs with a 5'-end purine. Catalyzes the hydrolysis of a broad range of dinucleotide pyrophosphates. This chain is NAD-capped RNA hydrolase NudC, found in Shigella flexneri.